Here is a 108-residue protein sequence, read N- to C-terminus: Ig kappa chain V region BS-5 (108 aa).

A framework-1 region spans residues 1–23 (DVVMTQTPASVSEPVGGTVTIKC). 2 cysteine pairs are disulfide-bonded: C23/C88 and C80/G108. The interval 24–34 (QASQSIYSNLA) is complementarity-determining-1. Residues 35 to 49 (WYQZKPGQPPKLLIY) form a framework-2 region. The segment at 50 to 56 (KASTLES) is complementarity-determining-2. Residues 57–88 (GVPSRFKGSGSGTDFTLTISDLECADAATYFC) form a framework-3 region. Residues 89 to 97 (QGSBYTGTV) form a complementarity-determining-3 region. Positions 98–107 (FGGGTEVVVK) are framework-4.

The protein is Ig kappa chain V region BS-5 of Oryctolagus cuniculus (Rabbit).